The following is a 530-amino-acid chain: Bifunctional purine biosynthesis protein PurH (530 aa).

The region spanning Met-1–Val-148 is the MGS-like domain.

It belongs to the PurH family.

The enzyme catalyses (6R)-10-formyltetrahydrofolate + 5-amino-1-(5-phospho-beta-D-ribosyl)imidazole-4-carboxamide = 5-formamido-1-(5-phospho-D-ribosyl)imidazole-4-carboxamide + (6S)-5,6,7,8-tetrahydrofolate. The catalysed reaction is IMP + H2O = 5-formamido-1-(5-phospho-D-ribosyl)imidazole-4-carboxamide. The protein operates within purine metabolism; IMP biosynthesis via de novo pathway; 5-formamido-1-(5-phospho-D-ribosyl)imidazole-4-carboxamide from 5-amino-1-(5-phospho-D-ribosyl)imidazole-4-carboxamide (10-formyl THF route): step 1/1. It participates in purine metabolism; IMP biosynthesis via de novo pathway; IMP from 5-formamido-1-(5-phospho-D-ribosyl)imidazole-4-carboxamide: step 1/1. The chain is Bifunctional purine biosynthesis protein PurH from Vibrio vulnificus (strain YJ016).